We begin with the raw amino-acid sequence, 409 residues long: Immunity-related GTPase family M protein 1 (409 aa).

Positions 75 to 251 constitute an IRG-type G domain; that stretch reads IPVSIFVTGD…PKLRDTLHKD (177 aa). GTP is bound by residues 84-91, 109-113, and 191-193; these read DSGNGMSS, TGVVR, and KLD. A Phosphoserine modification is found at Ser-202. A GTP-binding site is contributed by 232-234; that stretch reads SSL. Residue Lys-270 forms a Glycyl lysine isopeptide (Lys-Gly) (interchain with G-Cter in ubiquitin) linkage. Residues 350-374 form an alpha-K amphipathic helix region; the sequence is KLRLMTCAIVNAFFRLLRFLPCVCC.

Belongs to the TRAFAC class dynamin-like GTPase superfamily. IRG family. As to quaternary structure, interacts with ULK1; promoting the coassembly of ULK1 and BECN1. Interacts with BECN1; enhancing BECN1-interacting partners and influencing the composition of the BECN1 complex. Interacts with ATG16L1. Interacts with NOD2; promoting Irgm1 'Lys-63'-linked polyubiquitination, which is required for interactions with the core autophagy factors. Interacts with STX17; promoting STX17 recruitment to autophagosomes. Interacts with ATG8 proteins (GABARAP, GABARAPL1, GABARAPL2, MAP1LC3A, MAP1LC3B and MAP1LC3C); promoting STX17 recruitment to autophagosomes. Interacts with TFEB; promoting association between TFEB and PPP3CB and TFEB dephosphorylation. Interacts with PPP3CB; promoting association between TFEB and PPP3CB and TFEB dephosphorylation. Interacts with NLRP3; preventing NLRP3 inflammasome assembly and promoting SQSTM1/p62-dependent autophagic degradation of NLRP3. Interacts with CGAS; promoting SQSTM1/p62-dependent autophagic degradation of CGAS. Interacts with RIGI/RIG-I; promoting SQSTM1/p62-dependent autophagic degradation of RIGI/RIG-I. Interacts with NOD1; promoting SQSTM1/p62-dependent autophagic degradation of RIGI/RIG-I. Interacts with NOD2; promoting SQSTM1/p62-dependent autophagic degradation of RIGI/RIG-I. Interacts with RIPK2; promoting SQSTM1/p62-dependent autophagic degradation of RIGI/RIG-I. Interacts with PIK3CA. Post-translationally, palmitoylated on C-terminal Cys residues. Palmitoylation, together with the alpha-K amphipathic helix, which binds phosphatidylinositol, mediate binding to membranes. In terms of processing, ubiquitinated via 'Lys-63'-linked polyubiquitination in a NOD2-dependent process. 'Lys-63'-linked polyubiquitination is required for interactions with the core autophagy factors. Ubiquitination at Lys-270 by the DCX(WDR77) complex, also named CLR4(WDR77) complex, in intestinal cells, leading to its degradation by the proteasome. Expressed in lung and primary macrophages.

The protein resides in the golgi apparatus membrane. Its subcellular location is the cell membrane. It is found in the cytoplasmic vesicle. It localises to the phagosome membrane. The protein localises to the autophagosome membrane. The protein resides in the lysosome membrane. Its subcellular location is the late endosome membrane. It is found in the mitochondrion membrane. It localises to the lipid droplet. The protein localises to the cell projection. The protein resides in the phagocytic cup. The enzyme catalyses GTP + H2O = GDP + phosphate + H(+). Functionally, immunity-related GTPase that plays important roles in innate immunity and inflammatory response. Acts as a dynamin-like protein that binds to intracellular membranes and promotes remodeling and trafficking of those membranes. Required for clearance of acute protozoan and bacterial infections by interacting with autophagy and lysosome regulatory proteins, thereby promoting the fusion of phagosomes with lysosomes for efficient degradation of cargo including microbes. Regulates selective autophagy, including xenophagy and mitophagy, both directly and indirectly. Directly regulates autophagy by acting as a molecular adapter that promotes the coassembly of the core autophagy machinery to mediate antimicrobial defense: Irgm1 (1) activates AMPK, which in turn phosphorylates ULK1 and BECN1 to induce autophagy, (2) promotes the coassembly of ULK1 and BECN1, enhancing BECN1-interacting partners and (3) influences the composition of the BECN1 complex, by competing with the negative regulators BCL2 and RUBCN, to trigger autophagy. Also activates autophagy by promoting recruitment of STX17 to autophagosomes. In collaboration with ATG8 proteins, regulate lysosomal biogenesis, a fundamental process for any autophagic pathway, by promoting TFEB dephosphorylation. Also modulates autophagy by assisting with autophagosome formation and preventing lysosomal deacidification. Regulates autophagy by affecting mitochondrial fusion and fission. Also involved in M1 macrophage activation for the production of proinflammatory cytokines. While activating autophagy, acts as a key negative regulator of the inflammatory and interferon responses both by (1) promoting mitophagy and (2) mediating autophagy-dependent degradation of effectors of the inflammatory response. Promotes degradation of damaged and IFNG/IFN-gamma-stressed mitochondria via mitophagy, preventing cytosolic release of ligands that activate inflammation. Negatively regulates interferon-signaling in hematopoietic stem cells, preserving hematopoietic stem cell number and function. Promotes expansion of activated CD4(+) T-cells by inhibiting IFNG/IFN-gamma signaling, thereby preventing Ifng-mediated cell death of CD4(+) T-cells. Acts as a suppressor of inflammation by promoting recruitment of inflammation effectors, such as CGAS, RIGI/RIG-I and NLRP3, to autophagosome membranes, leading to their SQSTM1/p62-dependent autophagic degradation. Also directly inhibits assembly of the NLRP3 inflammasome by preventing the association between NLRP3 and PYCARD. Acts as a negative regulator of antiviral innate immune response by suppressing the RIPK2-dependent pro-inflammatory response: mediates recruitment of RIPosomes, composed of RIPK2 and NOD1 or NOD2, to autophagosome membranes, promoting their SQSTM1/p62-dependent autophagic degradation. This Mus musculus (Mouse) protein is Immunity-related GTPase family M protein 1.